The sequence spans 195 residues: uncharacterized protein (195 aa).

The interval 143 to 195 is disordered; it reads NKLIETINTNRTNNTDNKSTKSKKQTETKKSLRTNKIVKQPINKSKKNIREEY. The segment covering 148 to 159 has biased composition (low complexity); the sequence is TINTNRTNNTDN.

This is an uncharacterized protein from Acanthamoeba polyphaga (Amoeba).